The sequence spans 337 residues: MYKNLEEHNRLVNKYLKIFFVVSLYWCTSILTVFVNKHLLSSDTVNLGAPLFMSWFQCVVSTVICFVASRLSRKYPSVFTFPEGNPLDIDTFRKILPLSVLYTLMIGANNLSLSYVTVAFYYIGRSLTTVFSVVLTYVILRQRTSFKCLLCCGAIVVGFWLGVDQESLTEVFSWRGTIFGVLSSLALAMFSIQTKKSLGYVNQEVWLLSYYNNLYSTLLFLPLIIINGELESIITYPHLWASWFWAAMTLSGLCGFAIGFVTALEIKVTSALTHNISGTAKACAQTVIATQYYHDVRSALWWTSNVVVLVASAAYTRVKQLEMMRQHQQRSTATQKA.

8 consecutive transmembrane segments (helical) span residues 13–35 (NKYLKIFFVVSLYWCTSILTVFV), 45–67 (VNLGAPLFMSWFQCVVSTVICFV), 95–117 (ILPLSVLYTLMIGANNLSLSYVT), 121–140 (YYIGRSLTTVFSVVLTYVIL), 145–163 (SFKCLLCCGAIVVGFWLGV), 173–192 (SWRGTIFGVLSSLALAMFSI), 205–227 (VWLLSYYNNLYSTLLFLPLIIIN), and 242–264 (SWFWAAMTLSGLCGFAIGFVTAL).

It belongs to the TPT transporter family. SLC35C subfamily.

The protein resides in the golgi apparatus membrane. Functionally, involved in GDP-fucose import from the cytoplasm into the Golgi lumen. Plays a major role in the fucosylation of N-glycans. Functions redundantly with Efr in the O-fucosylation of Notch, positively regulating Notch signaling. The polypeptide is GDP-fucose transporter, Golgi (Drosophila melanogaster (Fruit fly)).